The sequence spans 350 residues: DNA-directed RNA polymerase subunit alpha (350 aa).

Residues 1–226 are alpha N-terminal domain (alpha-NTD); sequence MLISQRPTLS…ELFGLARELN (226 aa). Positions 241–350 are alpha C-terminal domain (alpha-CTD); sequence ADHIASFALP…NQDYAETEQL (110 aa). A disordered region spans residues 326 to 350; sequence ATGTWNSDAGYDLEDNQDYAETEQL. Residues 336-350 show a composition bias toward acidic residues; the sequence is YDLEDNQDYAETEQL.

The protein belongs to the RNA polymerase alpha chain family. In terms of assembly, homodimer. The RNAP catalytic core consists of 2 alpha, 1 beta, 1 beta' and 1 omega subunit. When a sigma factor is associated with the core the holoenzyme is formed, which can initiate transcription.

It carries out the reaction RNA(n) + a ribonucleoside 5'-triphosphate = RNA(n+1) + diphosphate. Its function is as follows. DNA-dependent RNA polymerase catalyzes the transcription of DNA into RNA using the four ribonucleoside triphosphates as substrates. In Mycobacterium sp. (strain JLS), this protein is DNA-directed RNA polymerase subunit alpha.